The sequence spans 150 residues: Large ribosomal subunit protein bL9 (150 aa).

The protein belongs to the bacterial ribosomal protein bL9 family.

Functionally, binds to the 23S rRNA. The sequence is that of Large ribosomal subunit protein bL9 from Streptococcus agalactiae serotype III (strain NEM316).